Here is a 217-residue protein sequence, read N- to C-terminus: Adenylate kinase (217 aa).

10–15 (GAGKGT) provides a ligand contact to ATP. The interval 30–59 (STGDMFRAAMKNETELGLKAKSYMDAGELV) is NMP. Residues T31, R36, 57 to 59 (ELV), 85 to 88 (GFPR), and Q92 contribute to the AMP site. Residues 126-163 (GRRVSPTSGRTYHVIFNPPKVEGICDVDGSELIQRDDD) are LID. Residues R127 and 136–137 (TY) contribute to the ATP site. Residues R160 and R171 each coordinate AMP. Q199 provides a ligand contact to ATP.

This sequence belongs to the adenylate kinase family. As to quaternary structure, monomer.

The protein resides in the cytoplasm. The enzyme catalyses AMP + ATP = 2 ADP. The protein operates within purine metabolism; AMP biosynthesis via salvage pathway; AMP from ADP: step 1/1. Catalyzes the reversible transfer of the terminal phosphate group between ATP and AMP. Plays an important role in cellular energy homeostasis and in adenine nucleotide metabolism. The sequence is that of Adenylate kinase from Halalkalibacterium halodurans (strain ATCC BAA-125 / DSM 18197 / FERM 7344 / JCM 9153 / C-125) (Bacillus halodurans).